The following is a 326-amino-acid chain: UDP-3-O-acylglucosamine N-acyltransferase (326 aa).

Residue His225 is the Proton acceptor of the active site.

This sequence belongs to the transferase hexapeptide repeat family. LpxD subfamily. Homotrimer.

The enzyme catalyses a UDP-3-O-[(3R)-3-hydroxyacyl]-alpha-D-glucosamine + a (3R)-hydroxyacyl-[ACP] = a UDP-2-N,3-O-bis[(3R)-3-hydroxyacyl]-alpha-D-glucosamine + holo-[ACP] + H(+). Its pathway is bacterial outer membrane biogenesis; LPS lipid A biosynthesis. Catalyzes the N-acylation of UDP-3-O-acylglucosamine using 3-hydroxyacyl-ACP as the acyl donor. Is involved in the biosynthesis of lipid A, a phosphorylated glycolipid that anchors the lipopolysaccharide to the outer membrane of the cell. This is UDP-3-O-acylglucosamine N-acyltransferase from Acidovorax ebreus (strain TPSY) (Diaphorobacter sp. (strain TPSY)).